Here is a 115-residue protein sequence, read N- to C-terminus: Large ribosomal subunit protein bL19 (115 aa).

The protein belongs to the bacterial ribosomal protein bL19 family.

In terms of biological role, this protein is located at the 30S-50S ribosomal subunit interface and may play a role in the structure and function of the aminoacyl-tRNA binding site. This Nitratidesulfovibrio vulgaris (strain ATCC 29579 / DSM 644 / CCUG 34227 / NCIMB 8303 / VKM B-1760 / Hildenborough) (Desulfovibrio vulgaris) protein is Large ribosomal subunit protein bL19.